The chain runs to 320 residues: GTP 3',8-cyclase (320 aa).

The region spanning 5–225 (QFGRKINYLR…IQLIKKDEKA (221 aa)) is the Radical SAM core domain. Arg14 provides a ligand contact to GTP. Residues Cys21 and Cys25 each coordinate [4Fe-4S] cluster. S-adenosyl-L-methionine is bound at residue Tyr27. Cys28 lines the [4Fe-4S] cluster pocket. Arg64 is a GTP binding site. Residue Gly68 coordinates S-adenosyl-L-methionine. Thr95 is a GTP binding site. Ser119 lines the S-adenosyl-L-methionine pocket. Lys155 serves as a coordination point for GTP. S-adenosyl-L-methionine is bound at residue Met189. 2 residues coordinate [4Fe-4S] cluster: Cys248 and Cys251. 253–255 (RIR) contributes to the GTP binding site. Cys265 serves as a coordination point for [4Fe-4S] cluster.

Belongs to the radical SAM superfamily. MoaA family. Monomer and homodimer. It depends on [4Fe-4S] cluster as a cofactor.

The enzyme catalyses GTP + AH2 + S-adenosyl-L-methionine = (8S)-3',8-cyclo-7,8-dihydroguanosine 5'-triphosphate + 5'-deoxyadenosine + L-methionine + A + H(+). Its pathway is cofactor biosynthesis; molybdopterin biosynthesis. Catalyzes the cyclization of GTP to (8S)-3',8-cyclo-7,8-dihydroguanosine 5'-triphosphate. This chain is GTP 3',8-cyclase, found in Campylobacter jejuni (strain RM1221).